The sequence spans 37 residues: Large ribosomal subunit protein bL36 (37 aa).

It belongs to the bacterial ribosomal protein bL36 family.

This is Large ribosomal subunit protein bL36 from Mycobacterium ulcerans (strain Agy99).